The following is a 319-amino-acid chain: MKRIGVLTSGGDSPGMNAAIRAVVRKAIFHDIEVYGIYHGYAGLISGHIEKLELGSVGDIIHRGGTKLYTARCPEFKDPEVRLKGIEQLKKHGIEGLVVIGGDGSYQGAKKLTEQGFPCVGVPGTIDNDIPGTDFTIGFDTALNTVIDAIDKIRDTATSHERTYVIEVMGRHAGDIALWAGLADGAETILIPEEEYDMDDVIARLKRGSERGKKHSIIVVAEGVGSAIDIGKHIEEATNFDTRVTVLGHVQRGGSPSAQDRVLASRLGARAVELLIAGKGGRCVGIQDNKLVDHDIIEALAQKHTIDKDMYQLSKELSI.

G11 lines the ATP pocket. 21 to 25 (RAVVR) provides a ligand contact to ADP. ATP-binding positions include 72-73 (RC) and 102-105 (GDGS). D103 serves as a coordination point for Mg(2+). A substrate-binding site is contributed by 125–127 (TID). D127 serves as the catalytic Proton acceptor. Residue R154 coordinates ADP. Substrate-binding positions include R162 and 169–171 (MGR). Residues 185–187 (GAE), R211, and 213–215 (KKH) each bind ADP. Residues E222, R243, and 249–252 (HVQR) each bind substrate.

It belongs to the phosphofructokinase type A (PFKA) family. ATP-dependent PFK group I subfamily. Prokaryotic clade 'B1' sub-subfamily. Homotetramer. Requires Mg(2+) as cofactor.

Its subcellular location is the cytoplasm. The enzyme catalyses beta-D-fructose 6-phosphate + ATP = beta-D-fructose 1,6-bisphosphate + ADP + H(+). It participates in carbohydrate degradation; glycolysis; D-glyceraldehyde 3-phosphate and glycerone phosphate from D-glucose: step 3/4. Allosterically activated by ADP and other diphosphonucleosides, and allosterically inhibited by phosphoenolpyruvate. Its function is as follows. Catalyzes the phosphorylation of D-fructose 6-phosphate to fructose 1,6-bisphosphate by ATP, the first committing step of glycolysis. This chain is ATP-dependent 6-phosphofructokinase, found in Bacillus cereus (strain B4264).